The sequence spans 202 residues: Casparian strip membrane protein 4 (202 aa).

The Cytoplasmic portion of the chain corresponds to 1 to 40; sequence MKSDSIAVDVPAESSSAIKGKAPLLGLARDHTGSGGYKRG. Residues 41-61 form a helical membrane-spanning segment; sequence LSIFDFLLRLAAIVAALAAAA. The Extracellular portion of the chain corresponds to 62-90; sequence TMGTSDETLPFFTQFLQFEASYDDLPTFQ. Residues 91–111 traverse the membrane as a helical segment; it reads FFVVAIAIVTGYLVLSLPFSV. Residues 112-130 are Cytoplasmic-facing; the sequence is VTIVRPLAVAPRLLLLVLD. The chain crosses the membrane as a helical span at residues 131–151; sequence TAALALDTAAASAAAAIVYLA. Residues 152 to 176 are Extracellular-facing; that stretch reads HNGNTNTNWLPICQQFGDFCQKTSG. A helical membrane pass occupies residues 177-197; that stretch reads AVVSAFASVTFLAILVVISGV. At 198–202 the chain is on the cytoplasmic side; it reads SLKRP.

This sequence belongs to the Casparian strip membrane proteins (CASP) family. In terms of assembly, homodimer and heterodimers.

The protein localises to the cell membrane. Functionally, regulates membrane-cell wall junctions and localized cell wall deposition. Required for establishment of the Casparian strip membrane domain (CSD) and the subsequent formation of Casparian strips, a cell wall modification of the root endodermis that determines an apoplastic barrier between the intraorganismal apoplasm and the extraorganismal apoplasm and prevents lateral diffusion. This Arabidopsis lyrata subsp. lyrata (Lyre-leaved rock-cress) protein is Casparian strip membrane protein 4.